The following is a 426-amino-acid chain: Enolase (426 aa).

Residue Q165 coordinates (2R)-2-phosphoglycerate. E209 functions as the Proton donor in the catalytic mechanism. Positions 244, 287, and 313 each coordinate Mg(2+). (2R)-2-phosphoglycerate contacts are provided by K338, R367, S368, and K389. Catalysis depends on K338, which acts as the Proton acceptor.

Belongs to the enolase family. The cofactor is Mg(2+).

It localises to the cytoplasm. The protein localises to the secreted. The protein resides in the cell surface. It catalyses the reaction (2R)-2-phosphoglycerate = phosphoenolpyruvate + H2O. It participates in carbohydrate degradation; glycolysis; pyruvate from D-glyceraldehyde 3-phosphate: step 4/5. Functionally, catalyzes the reversible conversion of 2-phosphoglycerate (2-PG) into phosphoenolpyruvate (PEP). It is essential for the degradation of carbohydrates via glycolysis. This is Enolase from Methanococcus maripaludis (strain C5 / ATCC BAA-1333).